A 140-amino-acid chain; its full sequence is Protein ApaG (140 aa).

The region spanning 13 to 137 is the ApaG domain; that stretch reads EARTRDIVVR…FSLHLPGAAM (125 aa).

This is Protein ApaG from Caulobacter vibrioides (strain ATCC 19089 / CIP 103742 / CB 15) (Caulobacter crescentus).